The sequence spans 1233 residues: Rho guanine nucleotide exchange factor 10-like protein (1233 aa).

A compositionally biased stretch (pro residues) spans 1–10 (MASSNPPPQP). Positions 1–93 (MASSNPPPQP…GTGVPAWVSN (93 aa)) are disordered. Acidic residues predominate over residues 26–46 (EAEDDPGEAFEFDDSDDEEDT). Ser40 bears the Phosphoserine mark. The segment covering 72-89 (PVTDPDPAAAPPGTGVPA) has biased composition (low complexity). Phosphotyrosine is present on residues Tyr131 and Tyr152. The segment at 159-193 (GAPRQAEDLGWSSSEFESYSEDSGEEAKPEVEPAK) is disordered. A compositionally biased stretch (basic and acidic residues) spans 183-193 (EEAKPEVEPAK). Ser240 is subject to Phosphoserine. One can recognise a DH domain in the interval 275–462 (VRRHILGSIV…ETLAEKLNEQ (188 aa)). Residues 1089-1104 (QEEAEGPRAEEEKPDG) are compositionally biased toward basic and acidic residues. 2 disordered regions span residues 1089-1117 (QEEA…HVGR) and 1140-1161 (PLLS…SEED).

In terms of assembly, interacts with RHOA, RHOB and RHOC.

It localises to the cytoplasm. Acts as a guanine nucleotide exchange factor (GEF) for RHOA, RHOB and RHOC. In Pongo abelii (Sumatran orangutan), this protein is Rho guanine nucleotide exchange factor 10-like protein (ARHGEF10L).